The sequence spans 58 residues: Preprotein translocase subunit SecG (58 aa).

Over 1-32 (MAQKKKSSGSGLMSSAGLMTYYDADKKAIHVQ) the chain is Cytoplasmic. Residues 33 to 54 (PKTVFIFGAICGIVILAFSAGF) traverse the membrane as a helical segment. Topologically, residues 55–58 (GLWP) are extracellular.

It belongs to the SEC61-beta family. In terms of assembly, component of the protein translocase complex. Heterotrimer consisting of alpha (SecY), beta (SecG) and gamma (SecE) subunits. Can form oligomers of the heterotrimer.

It is found in the cell membrane. Involved in protein export. The function of the beta subunit is unknown, but it may be involved in stabilization of the trimeric complex. The protein is Preprotein translocase subunit SecG of Methanococcoides burtonii (strain DSM 6242 / NBRC 107633 / OCM 468 / ACE-M).